Reading from the N-terminus, the 1046-residue chain is Hemoglobin-haptoglobin-binding protein A (1046 aa).

A signal peptide spans 1-24 (MTNFRLNLLAYSVMLGLTAGVAYA). 4 repeat units span residues 26-29 (QPTN), 30-33 (QPTN), 34-37 (QPTN), and 38-41 (QPTN). A 4 X 4 AA tandem repeats of Q-P-T-N region spans residues 26–41 (QPTNQPTNQPTNQPTN). The TonB box motif lies at 51–58 (EQINVLGS). In terms of domain architecture, TBDR plug spans 61–188 (HNDNTPPKIA…LGGSVSFDTK (128 aa)). Residues 196 to 1046 (NKNYYASYKR…NYRMSVQFEF (851 aa)) enclose the TBDR beta-barrel domain. The TonB C-terminal box motif lies at 1029 to 1046 (NRFYAPGRNYRMSVQFEF).

This sequence belongs to the TonB-dependent receptor family. Hemoglobin/haptoglobin binding protein subfamily.

It is found in the cell outer membrane. Acts as a receptor for the hemoglobin/haptoglobin complex of the human host and is required for heme uptake. Does not bind hemoglobin alone. The chain is Hemoglobin-haptoglobin-binding protein A (hhuA) from Haemophilus influenzae.